Here is a 246-residue protein sequence, read N- to C-terminus: Probable S-methyl-5'-thioinosine phosphorylase (246 aa).

Residues threonine 10 and 52-53 (RH) each bind phosphate. Residue methionine 185 participates in substrate binding. Threonine 186 contributes to the phosphate binding site. 209–211 (NPA) contacts substrate.

This sequence belongs to the PNP/MTAP phosphorylase family. MTAP subfamily. In terms of assembly, homotrimer.

It catalyses the reaction S-methyl-5'-thioinosine + phosphate = 5-(methylsulfanyl)-alpha-D-ribose 1-phosphate + hypoxanthine. It functions in the pathway purine metabolism; purine nucleoside salvage. In terms of biological role, catalyzes the reversible phosphorylation of S-methyl-5'-thioinosine (MTI) to hypoxanthine and 5-methylthioribose-1-phosphate. Involved in the breakdown of S-methyl-5'-thioadenosine (MTA), a major by-product of polyamine biosynthesis. Catabolism of (MTA) occurs via deamination to MTI and phosphorolysis to hypoxanthine. The polypeptide is Probable S-methyl-5'-thioinosine phosphorylase (Pseudomonas syringae pv. tomato (strain ATCC BAA-871 / DC3000)).